A 172-amino-acid polypeptide reads, in one-letter code: C-phycocyanin beta chain (172 aa).

Asparagine 72 is subject to N4-methylasparagine. (2R,3E)-phycocyanobilin-binding residues include cysteine 82 and cysteine 153.

This sequence belongs to the phycobiliprotein family. As to quaternary structure, heterodimer of an alpha and a beta subunit, which further assembles into trimers and the trimers into hexamers. The basic functional unit of phycobiliproteins is a ring-shaped hexamer formed from two back-to-back trimers contacting via the alpha chain subunits. The trimers are composed of alpha/beta subunit heterodimers arranged around a three-fold axis of symmetry. The phycoerythrins also contain a gamma subunit which is located in the center of the hexamer. Post-translationally, contains two covalently linked bilin chromophores.

Its subcellular location is the plastid. The protein resides in the chloroplast thylakoid membrane. Functionally, light-harvesting photosynthetic bile pigment-protein from the phycobiliprotein complex (phycobilisome, PBS). Phycocyanin is the major phycobiliprotein in the PBS rod. The protein is C-phycocyanin beta chain (cpcB) of Pyropia yezoensis (Susabi-nori).